A 176-amino-acid polypeptide reads, in one-letter code: UBA-like domain-containing protein 1 (176 aa).

Residues 87-176 (SESFHGGGGS…RAHPAMEAER (90 aa)) are disordered. The span at 120–137 (TPSWPTAASPPGGPQQHQ) shows a compositional bias: low complexity. Residues 138–150 (PQPPLWTPAPPSP) show a composition bias toward pro residues. Basic and acidic residues predominate over residues 166 to 176 (PRAHPAMEAER).

Belongs to the UBALD family.

In Mus musculus (Mouse), this protein is UBA-like domain-containing protein 1 (Ubald1).